Reading from the N-terminus, the 377-residue chain is Beta sliding clamp (377 aa).

This sequence belongs to the beta sliding clamp family. In terms of assembly, forms a ring-shaped head-to-tail homodimer around DNA which binds and tethers DNA polymerases and other proteins to the DNA. The DNA replisome complex has a single clamp-loading complex (3 tau and 1 each of delta, delta', psi and chi subunits) which binds 3 Pol III cores (1 core on the leading strand and 2 on the lagging strand) each with a beta sliding clamp dimer. Additional proteins in the replisome are other copies of gamma, psi and chi, Ssb, DNA helicase and RNA primase.

The protein localises to the cytoplasm. Functionally, confers DNA tethering and processivity to DNA polymerases and other proteins. Acts as a clamp, forming a ring around DNA (a reaction catalyzed by the clamp-loading complex) which diffuses in an ATP-independent manner freely and bidirectionally along dsDNA. Initially characterized for its ability to contact the catalytic subunit of DNA polymerase III (Pol III), a complex, multichain enzyme responsible for most of the replicative synthesis in bacteria; Pol III exhibits 3'-5' exonuclease proofreading activity. The beta chain is required for initiation of replication as well as for processivity of DNA replication. The sequence is that of Beta sliding clamp (dnaN) from Staphylococcus epidermidis (strain ATCC 35984 / DSM 28319 / BCRC 17069 / CCUG 31568 / BM 3577 / RP62A).